A 130-amino-acid polypeptide reads, in one-letter code: Small ribosomal subunit protein uS8 (130 aa).

Belongs to the universal ribosomal protein uS8 family. Part of the 30S ribosomal subunit. Contacts proteins S5 and S12.

Functionally, one of the primary rRNA binding proteins, it binds directly to 16S rRNA central domain where it helps coordinate assembly of the platform of the 30S subunit. This Buchnera aphidicola subsp. Acyrthosiphon kondoi (Acyrthosiphon kondoi symbiotic bacterium) protein is Small ribosomal subunit protein uS8.